Here is a 259-residue protein sequence, read N- to C-terminus: Ribosome maturation factor RimP (259 aa).

The tract at residues 198-259 is disordered; sequence SLGLAPEPPP…RGEIDTSEGD (62 aa). Over residues 243-253 the composition is skewed to basic and acidic residues; sequence LAADKARRGEI.

This sequence belongs to the RimP family.

Its subcellular location is the cytoplasm. Functionally, required for maturation of 30S ribosomal subunits. The chain is Ribosome maturation factor RimP from Rhodopseudomonas palustris (strain TIE-1).